Reading from the N-terminus, the 275-residue chain is Putative methylglyoxal reductase DkgA (275 aa).

The active-site Proton donor is the tyrosine 51. Histidine 107 is a substrate binding site. NADP(+) is bound at residue 187-241 (SPLAQGGEGVFDQKVIRELADKYGKTPAQIVIRWHLDCGLVVIPKSVTPSRIAEN).

Belongs to the aldo/keto reductase family. As to quaternary structure, monomer.

It localises to the cytoplasm. The catalysed reaction is hydroxyacetone + NADP(+) = methylglyoxal + NADPH + H(+). Its function is as follows. Aldo-keto reductase that significantly contributes to cellular methylglyoxal detoxification by catalyzing the NADPH-dependent conversion of methylglyoxal to acetol. This chain is Putative methylglyoxal reductase DkgA, found in Salmonella typhi.